The sequence spans 435 residues: MGKQEVKTRQGERVAIVAGLRTPFARQSTEFSQVPAVDLGKMVVSDLLARTDIDPKLIDQVVFGQVVQMPEAPNIAREIVLGTGMNIHTDAYSVTRACATSFQSAVNVAESIMAGAIDIGIAGGADSSSVLPIGVSKKLAASLLALSKTKTLGQKLKVLSGLGLKDLMPVPPAVAEYSTGLSMGQTAEQMAKTHGITRAEQDALAHRSHTLASQAWRDGKIAGEVMTAFPEPYKKWIAEDNNIRHDSTLEGYAKLRPAFDRQYGSVTAANSTPLTDGAAAVLLMREGRAKELGMEILGYIRGYAFSAIGVESDMLMGPSYATSKVLQSTGLALSDLTLIDMHEAFAAQALANVKMFASDKFAQENLGRSKAMGEIDMDKFNVLGGSIAYGHPFAATGARMMTQTLRELKRRGGGLALNTACAAGGLGAAMILEVE.

Cysteine 98 functions as the Acyl-thioester intermediate in the catalytic mechanism. Active-site proton acceptor residues include histidine 391 and cysteine 421.

Belongs to the thiolase-like superfamily. Thiolase family. As to quaternary structure, heterotetramer of two alpha chains (FadJ) and two beta chains (FadI).

The protein resides in the cytoplasm. The enzyme catalyses an acyl-CoA + acetyl-CoA = a 3-oxoacyl-CoA + CoA. It functions in the pathway lipid metabolism; fatty acid beta-oxidation. In terms of biological role, catalyzes the final step of fatty acid oxidation in which acetyl-CoA is released and the CoA ester of a fatty acid two carbons shorter is formed. The protein is 3-ketoacyl-CoA thiolase of Vibrio vulnificus (strain YJ016).